A 288-amino-acid polypeptide reads, in one-letter code: Co-chaperone protein DjlA (288 aa).

Over 1-6 (MEFIGK) the chain is Periplasmic. Residues 7-30 (IIGVFLGWKVGGFFGAIAGLILGS) traverse the membrane as a helical segment. Residues 31–288 (IADKKLYELG…DLICKAKGWK (258 aa)) lie on the Cytoplasmic side of the membrane. In terms of domain architecture, J spans 222 to 288 (DAYKVLGVTE…DLICKAKGWK (67 aa)).

Homodimer.

The protein resides in the cell inner membrane. In terms of biological role, regulatory DnaK co-chaperone. Direct interaction between DnaK and DjlA is needed for the induction of the wcaABCDE operon, involved in the synthesis of a colanic acid polysaccharide capsule, possibly through activation of the RcsB/RcsC phosphotransfer signaling pathway. The colanic acid capsule may help the bacterium survive conditions outside the host. This chain is Co-chaperone protein DjlA, found in Haemophilus influenzae (strain ATCC 51907 / DSM 11121 / KW20 / Rd).